An 82-amino-acid polypeptide reads, in one-letter code: Toxin GTx1-15 (82 aa).

The N-terminal stretch at 1–21 (MKTSVVFVIAGLALLSVACYA) is a signal peptide. The propeptide occupies 22-46 (SELKEQSSINEVLSTIFHFEQPEER). Cystine bridges form between C48/C63, C55/C69, and C62/C76. A Phenylalanine amide modification is found at F80.

Belongs to the neurotoxin 10 (Hwtx-1) family. 08 (Gtx1-15) subfamily. As to expression, expressed by the venom gland.

The protein resides in the secreted. In terms of biological role, potent voltage-gated sodium channel blocker. Potently inhibits the voltage-gated sodium channels Nav1.7/SCN9A (IC(50)=0.58-10 nM). Shows a moderate activity on Nav1.1/SCN1A (IC(50)=6 nM), Nav1.2/SCN2A (IC(50)=5-128 nM), Nav1.3/SCN3A (IC(50)=20.3-170 nM), and Nav1.6/SCN8A (IC(50)=17-20.1 nM). Shows an unclear inhibition of Nav1.4/SCN4A (IC(50)=200 nM to &gt;10 uM), Nav1.5/SCN5A (IC(50)=140 nM to &gt;10 uM) and Nav1.8/SCN10A (IC(50)=68-12200 nM). Weakly blocks the low voltage-gated calcium channels Cav3.1/CACNA1G (30% inhibition of the peak current by 9.8 nM of the toxin). It shows moderate affinity for lipid bilayers. The polypeptide is Toxin GTx1-15 (Grammostola rosea (Chilean rose tarantula)).